Here is a 1383-residue protein sequence, read N- to C-terminus: DNA-directed RNA polymerase subunit beta (1383 aa).

This sequence belongs to the RNA polymerase beta chain family. As to quaternary structure, the RNAP catalytic core consists of 2 alpha, 1 beta, 1 beta' and 1 omega subunit. When a sigma factor is associated with the core the holoenzyme is formed, which can initiate transcription.

It carries out the reaction RNA(n) + a ribonucleoside 5'-triphosphate = RNA(n+1) + diphosphate. DNA-dependent RNA polymerase catalyzes the transcription of DNA into RNA using the four ribonucleoside triphosphates as substrates. This is DNA-directed RNA polymerase subunit beta from Anaplasma phagocytophilum (strain HZ).